Reading from the N-terminus, the 280-residue chain is Borealin (280 aa).

Residues 1–58 are required for interaction with INCENP; sequence MAPRKGSSRVAKTNSLRRRKLASFLKDFDREVEIRIKQIESDRQNLLKEVDNLYNIEI. Residues 1–88 are required for centromere localization; sequence MAPRKGSSRV…NKQALEEAAT (88 aa). The interval 1-140 is required for interaction with SENP3; it reads MAPRKGSSRV…ENERKNLQTA (140 aa). The tract at residues 10–109 is required to form a minimal CPC core complex that localizes to the central spindle and midbody and properly executes the role of the CPC during cytokinesis; it reads VAKTNSLRRR…TAEAIQTPLK (100 aa). The required for interaction with INCENP and BIRC5 stretch occupies residues 20–78; the sequence is KLASFLKDFDREVEIRIKQIESDRQNLLKEVDNLYNIEILRLPKALREMNWLDYFALGG. Phosphothreonine; by TTK is present on residues threonine 88 and threonine 94. Threonine 106 bears the Phosphothreonine mark. A Phosphoserine modification is found at serine 110. The segment at 130–169 is disordered; the sequence is EENERKNLQTARVKRCPPSKKRTQSIQGKGKGKRSSRANT. Lysine 135 participates in a covalent cross-link: Glycyl lysine isopeptide (Lys-Gly) (interchain with G-Cter in SUMO2). Residues 141–152 are compositionally biased toward basic residues; that stretch reads RVKRCPPSKKRT. Serine 165 carries the post-translational modification Phosphoserine; by AURKB. The residue at position 169 (threonine 169) is a Phosphothreonine; by TTK. Threonine 189 and threonine 204 each carry phosphothreonine. A phosphoserine mark is found at serine 219 and serine 224. A Phosphothreonine; by TTK modification is found at threonine 230. Phosphoserine occurs at positions 238 and 244.

Belongs to the borealin family. In terms of assembly, may form homooligomers and homodimers. Component of the chromosomal passenger complex (CPC) composed of at least BIRC5/survivin, CDCA8/borealin, INCENP, AURKB or AURKC; in the complex forms a triple-helix bundle-based subcomplex with INCENP and BIRC5. Interacts with SENP3, UBE2I and RANBP2. Interacts (phosphorylated) with SGO1 and SGO2; the association is dependent on CDK1. Phosphorylated by TTK, essentially at Thr-88, Thr94, Thr-169 and Thr-230. Phosphorylation (probably by CDK1) promotes targeting of the CPC to centromeric DNA. In terms of processing, sumoylated by UBE2I and RANBP2. Desumoylated by SENP3 through the removal of SUMO2 and SUMO3.

It is found in the nucleus. Its subcellular location is the nucleolus. The protein localises to the cytoplasm. The protein resides in the chromosome. It localises to the centromere. It is found in the cytoskeleton. Its subcellular location is the spindle. In terms of biological role, component of the chromosomal passenger complex (CPC), a complex that acts as a key regulator of mitosis. The CPC complex has essential functions at the centromere in ensuring correct chromosome alignment and segregation and is required for chromatin-induced microtubule stabilization and spindle assembly. In the complex, it may be required to direct the CPC to centromeric DNA. The chain is Borealin (CDCA8) from Pongo abelii (Sumatran orangutan).